The following is a 621-amino-acid chain: MTLGLEQAEEQRLYQQTLLQDGLKDMLDHGKFLDCVVRVGEREFPCHRLVLAACSPYFRARFLAEPDSAGEVRLEEVSPDVVSQVLHYLYTSEIALDEASVQDLFAAAHRFQIPSIFTICVSFLQKRLCLANCLAVFRLGLLLDCARLAVAARDFICARFPLVARDNDFLGLSADELIAIISSDGLNVEKEEAVFEAVMRWASSGDAEAQAERQRALPTVFESVRCRLLPRAFLETRVERHPLVRSQPELLRKVQMVKDAHEGRLTTLRKKKKEKGEQTARAKEANQGTEDTKAEDDEERVLPGILNDTLRFGMFLQDLIFMISEEGAVAYDPAANECYCASLSTQIPKNHVSLVTKENQVFVAGGLFYNEDNKEDPMSAYFLQFDHLDSEWLGMPPLPSPRCLFGLGEALNAIYVVGGRELKDSEDSLDSVLCYDRLSFKWGESDPLPYAVYGHTVLSHMDLVYVIGGKGKDRKCLNKMCVYDPKKFEWKELAPMQTARSLFGATVHDGRIFVAAGVTDTGLTSSSEVYSIADNKWTSFEAFPQERSSLSLVSLAGTLYALGGFATLETESGELVPTELNDIWRYNEDEKKWEGVLREIAYAAGATFLPVRLNVVRLTKM.

Residues 33–98 enclose the BTB domain; it reads LDCVVRVGER…LYTSEIALDE (66 aa). The region spanning 133-239 is the BACK domain; sequence CLAVFRLGLL…PRAFLETRVE (107 aa). A disordered region spans residues 265 to 298; that stretch reads LTTLRKKKKEKGEQTARAKEANQGTEDTKAEDDE. Positions 274–284 are enriched in basic and acidic residues; sequence EKGEQTARAKE. 5 Kelch repeats span residues 360 to 412, 413 to 462, 463 to 510, 512 to 557, and 559 to 613; these read QVFV…EALN, AIYV…SHMD, LVYV…VHDG, IFVA…SLAG, and LYAL…PVRL.

This sequence belongs to the KLHL40 family. As to quaternary structure, component of the BCR(KLHL40) E3 ubiquitin ligase complex, at least composed of CUL3, KLHL40 and RBX1. Interacts with LMOD3. As to expression, specifically expressed in skeletal muscles in embryonic, neonatal and adults. Expressed in various types of muscles, including extensor digitorum longus, gastrocnemius, soleus, diaphragm, masseter and heart (at protein level). Not detected in brain, liver and lung (at protein level).

Its subcellular location is the cytoplasm. The protein resides in the myofibril. The protein localises to the sarcomere. It is found in the a band. It localises to the i band. Substrate-specific adapter of a BCR (BTB-CUL3-RBX1) E3 ubiquitin ligase complex that acts as a key regulator of skeletal muscle development. The BCR(KLHL40) complex acts by mediating ubiquitination and degradation of TFDP1, thereby regulating the activity of the E2F:DP transcription factor complex. Promotes stabilization of LMOD3 by acting as a negative regulator of LMOD3 ubiquitination; the molecular process by which it negatively regulates ubiquitination of LMOD3 is however unclear. This is Kelch-like protein 40 from Mus musculus (Mouse).